Reading from the N-terminus, the 436-residue chain is AMSH-like protease (436 aa).

Methionine 1 is modified (N-acetylmethionine). Residues serine 25 and serine 242 each carry the phosphoserine modification. One can recognise an MPN domain in the interval 269 to 397 (VVLPEDLCHK…IFRLTNAGML (129 aa)). Histidine 347, histidine 349, aspartate 360, histidine 362, cysteine 402, histidine 408, and histidine 410 together coordinate Zn(2+). The JAMM motif motif lies at 347 to 360 (HTHPTQTAFLSSVD).

The protein belongs to the peptidase M67C family. Requires Zn(2+) as cofactor. As to expression, ubiquitously expressed.

With respect to regulation, inhibited by UbV(SP.1), an ubiquitin variant that also inhibits STAMBP. Zinc metalloprotease that specifically cleaves 'Lys-63'-linked polyubiquitin chains. Acts as a positive regulator of the TORC1 signaling pathway by mediating 'Lys-63'-linked deubiquitination of SESN2, thereby inhibiting SESN2-interaction with the GATOR2 complex. Does not cleave 'Lys-48'-linked polyubiquitin chains. This chain is AMSH-like protease, found in Homo sapiens (Human).